Reading from the N-terminus, the 334-residue chain is CRISPR-associated protein Cas1 3 (334 aa).

Mn(2+)-binding residues include glutamate 165, histidine 230, and glutamate 245.

It belongs to the CRISPR-associated endonuclease Cas1 family. Homodimer, forms a heterotetramer with a Cas2 homodimer. The cofactor is Mg(2+). Requires Mn(2+) as cofactor.

CRISPR (clustered regularly interspaced short palindromic repeat), is an adaptive immune system that provides protection against mobile genetic elements (viruses, transposable elements and conjugative plasmids). CRISPR clusters contain spacers, sequences complementary to antecedent mobile elements, and target invading nucleic acids. CRISPR clusters are transcribed and processed into CRISPR RNA (crRNA). Acts as a dsDNA endonuclease. Involved in the integration of spacer DNA into the CRISPR cassette. The protein is CRISPR-associated protein Cas1 3 of Methanobrevibacter ruminantium (strain ATCC 35063 / DSM 1093 / JCM 13430 / OCM 146 / M1) (Methanobacterium ruminantium).